We begin with the raw amino-acid sequence, 282 residues long: Glutamate--LysW ligase ArgX (282 aa).

Residues Lys87, Lys127, 131–137, and 167–178 each bind ATP; these read GSWGRLV and QEYIQYKGRDIR. Residues 91–277 enclose the ATP-grasp domain; the sequence is YSKLYREGIP…VAQKLVEYIK (187 aa). Arg192 is a substrate binding site. Asn202 provides a ligand contact to ATP. A substrate-binding site is contributed by 203–204; sequence VA. Mg(2+) is bound by residues Asp237, Glu250, and Asn252. 256 to 260 serves as a coordination point for substrate; it reads EFKGF. The GF motif that is essential for ArgX substrate specificity signature appears at 259–260; it reads GF.

The protein belongs to the RimK family. LysX subfamily. Homotetramer. Interacts with LysW. It depends on Mg(2+) as a cofactor.

It carries out the reaction [amino-group carrier protein]-C-terminal-L-glutamate + L-glutamate + ATP = [amino-group carrier protein]-C-terminal-gamma-(L-glutamyl)-L-glutamate + ADP + phosphate + H(+). Its pathway is amino-acid biosynthesis; L-arginine biosynthesis. In terms of biological role, catalyzes the ATP-dependent formation of a covalent bond between the amino group of glutamate and the gamma-carboxyl group of the C-terminal glutamate residue in LysW. This chain is Glutamate--LysW ligase ArgX, found in Sulfurisphaera tokodaii (strain DSM 16993 / JCM 10545 / NBRC 100140 / 7) (Sulfolobus tokodaii).